The sequence spans 140 residues: uncharacterized protein (140 aa).

The signal sequence occupies residues M1–A22.

This is an uncharacterized protein from Archaeoglobus fulgidus (strain ATCC 49558 / DSM 4304 / JCM 9628 / NBRC 100126 / VC-16).